Here is a 289-residue protein sequence, read N- to C-terminus: 4-diphosphocytidyl-2-C-methyl-D-erythritol kinase (289 aa).

Residue K10 is part of the active site. An ATP-binding site is contributed by 94 to 104 (PVAAGLAGGSS). Residue D136 is part of the active site.

This sequence belongs to the GHMP kinase family. IspE subfamily.

It catalyses the reaction 4-CDP-2-C-methyl-D-erythritol + ATP = 4-CDP-2-C-methyl-D-erythritol 2-phosphate + ADP + H(+). It functions in the pathway isoprenoid biosynthesis; isopentenyl diphosphate biosynthesis via DXP pathway; isopentenyl diphosphate from 1-deoxy-D-xylulose 5-phosphate: step 3/6. Catalyzes the phosphorylation of the position 2 hydroxy group of 4-diphosphocytidyl-2C-methyl-D-erythritol. This chain is 4-diphosphocytidyl-2-C-methyl-D-erythritol kinase, found in Bacillus mycoides (strain KBAB4) (Bacillus weihenstephanensis).